The primary structure comprises 137 residues: Ribosome-binding factor A (137 aa).

This sequence belongs to the RbfA family. In terms of assembly, monomer. Binds 30S ribosomal subunits, but not 50S ribosomal subunits or 70S ribosomes.

It localises to the cytoplasm. One of several proteins that assist in the late maturation steps of the functional core of the 30S ribosomal subunit. Associates with free 30S ribosomal subunits (but not with 30S subunits that are part of 70S ribosomes or polysomes). Required for efficient processing of 16S rRNA. May interact with the 5'-terminal helix region of 16S rRNA. In Trichodesmium erythraeum (strain IMS101), this protein is Ribosome-binding factor A.